Here is a 214-residue protein sequence, read N- to C-terminus: Molybdenum cofactor guanylyltransferase (214 aa).

Residues 18–20 (LAG), Lys-31, Asp-77, and Asp-112 contribute to the GTP site. Residue Asp-112 participates in Mg(2+) binding.

This sequence belongs to the MobA family. As to quaternary structure, monomer. It depends on Mg(2+) as a cofactor.

The protein resides in the cytoplasm. It catalyses the reaction Mo-molybdopterin + GTP + H(+) = Mo-molybdopterin guanine dinucleotide + diphosphate. Transfers a GMP moiety from GTP to Mo-molybdopterin (Mo-MPT) cofactor (Moco or molybdenum cofactor) to form Mo-molybdopterin guanine dinucleotide (Mo-MGD) cofactor. The protein is Molybdenum cofactor guanylyltransferase of Rhodopseudomonas palustris (strain HaA2).